The chain runs to 345 residues: Major capsid protein (345 aa).

Intercapsomeric interactions stretches follow at residues 11-25 (GTNQGKGVVAAGDKL) and 152-156 (YNENI).

This sequence belongs to the T7virus major capsid protein family. In terms of assembly, homohexamer. Interacts with the connector protein and the minor capsid protein. Interacts with the capsid assembly scaffolding protein; capsid proteins and scaffolding proteins form building blocks that assemble to form the procapsid, each hexamer of the major capsid protein interacting with 2 scaffolding proteins.

The protein localises to the virion. Functionally, assembles with the minor capsid protein to form an icosahedral capsid with a T=7 symmetry, about 60 nm in diameter, and consisting of 415 capsid proteins. The major and minor capsid proteins are incorporated into the capsid in about a 90/10 ratio respectively. Once the capsid is formed, encapsidates one single copy of the viral genome. The polypeptide is Major capsid protein (Escherichia coli (Bacteriophage T7)).